Consider the following 181-residue polypeptide: Bifunctional protein PyrR (181 aa).

The short motif at 101–113 (VILVDDVLFTGRT) is the PRPP-binding element.

Belongs to the purine/pyrimidine phosphoribosyltransferase family. PyrR subfamily.

It catalyses the reaction UMP + diphosphate = 5-phospho-alpha-D-ribose 1-diphosphate + uracil. In terms of biological role, regulates the transcription of the pyrimidine nucleotide (pyr) operon in response to exogenous pyrimidines. Functionally, also displays a weak uracil phosphoribosyltransferase activity which is not physiologically significant. The sequence is that of Bifunctional protein PyrR from Desulfosudis oleivorans (strain DSM 6200 / JCM 39069 / Hxd3) (Desulfococcus oleovorans).